The sequence spans 305 residues: tRNA dimethylallyltransferase (305 aa).

8-15 (GPTASGKT) contributes to the ATP binding site. 10-15 (TASGKT) provides a ligand contact to substrate. Positions 33 to 36 (DSQQ) are interaction with substrate tRNA.

This sequence belongs to the IPP transferase family. Monomer. It depends on Mg(2+) as a cofactor.

The enzyme catalyses adenosine(37) in tRNA + dimethylallyl diphosphate = N(6)-dimethylallyladenosine(37) in tRNA + diphosphate. Its function is as follows. Catalyzes the transfer of a dimethylallyl group onto the adenine at position 37 in tRNAs that read codons beginning with uridine, leading to the formation of N6-(dimethylallyl)adenosine (i(6)A). In Anaeromyxobacter dehalogenans (strain 2CP-1 / ATCC BAA-258), this protein is tRNA dimethylallyltransferase.